A 758-amino-acid chain; its full sequence is Dolichyl-phosphooligosaccharide-protein glycotransferase 2 (758 aa).

At 1-6 (MKRRYS) the chain is on the cytoplasmic side. Residues 7–27 (ILIILLVAIFYRMITFRFKYL) traverse the membrane as a helical segment. Residues 28 to 92 (LGYDPYFHLA…KVFGVSLTTT (65 aa)) are Extracellular-facing. Residues 29–31 (GYD) carry the DXD motif 1 motif. Residue D31 participates in Mn(2+) binding. The helical transmembrane segment at 93–113 (FKITPVIFGVLTVIFLYLSLL) threads the bilayer. The Cytoplasmic segment spans residues 114 to 120 (KLYDEKR). The chain crosses the membrane as a helical span at residues 121–141 (AFFGGFFLAISYGHVFRSMAN). Over 142–145 (YYRG) the chain is Extracellular. Mn(2+) contacts are provided by R144 and D146. The short motif at 144-146 (RGD) is the DXD motif 2 element. Residues 146–166 (DNYMLFWYSVALLGISLALGI) traverse the membrane as a helical segment. Residues 167 to 175 (KKGKWKYKR) lie on the Cytoplasmic side of the membrane. 2 consecutive transmembrane segments (helical) span residues 176–196 (LIFYTLPVLASGFSAIFWQAY) and 197–217 (YPIFAFLLSNALLLAVGAFIL). Residues 218-226 (KKDKYLLDS) lie on the Cytoplasmic side of the membrane. A helical membrane pass occupies residues 227–247 (IILILSTAFGVLLANYLGGIF). Over 248–281 (GYGMLGYAKWLGKSVAKKLGLEFGYLKDVYLILH) the chain is Extracellular. Residues 282 to 302 (LKYLVPISLSFVLVLILLGFL) traverse the membrane as a helical segment. Residues 303–310 (TKDIRIRS) lie on the Cytoplasmic side of the membrane. A helical membrane pass occupies residues 311 to 331 (LFLGIASFIGIIILFKRFEAL). Over 332-352 (KELSTGFGIFKEAPILETQPT) the chain is Extracellular. The TIXE motif motif lies at 340 to 343 (IFKE). The helical transmembrane segment at 353 to 373 (SFKDLWAAFSLSFFLTPLFFI) threads the bilayer. The Cytoplasmic segment spans residues 374–379 (RFKKPR). The chain crosses the membrane as a helical span at residues 380-400 (VEDFLTLGLIIPSVYMLKTWT). A topological domain (extracellular) is located at residue R401. An a glycophospholipid-binding site is contributed by R401. The chain crosses the membrane as a helical span at residues 402 to 422 (FLFIGSMAIAIMSGIGIVELY). At 423–433 (EAIKPRLNGKK) the chain is on the cytoplasmic side. A helical membrane pass occupies residues 434 to 454 (ALATGIITLVILPGVIAGLSF). Residues 455-758 (KEVCSLHPEM…DRGVFRLSYN (304 aa)) lie on the Extracellular side of the membrane. Positions 488-490 (WWD) are interacts with target acceptor peptide in protein substrate. The WWDYG motif motif lies at 488-492 (WWDWG). Positions 540–547 (DFLKFGAI) match the DK motif motif.

Belongs to the STT3 family. Requires Mn(2+) as cofactor. The cofactor is Mg(2+).

It is found in the cell membrane. It catalyses the reaction an archaeal dolichyl phosphooligosaccharide + [protein]-L-asparagine = an archaeal dolichyl phosphate + a glycoprotein with the oligosaccharide chain attached by N-beta-D-glycosyl linkage to a protein L-asparagine.. It functions in the pathway protein modification; protein glycosylation. Oligosaccharyl transferase (OST) that catalyzes the initial transfer of a defined glycan (ManNAcXyl(2)GlcAMan(2)GalNAc in Pyrococcus) from the lipid carrier dolichol-monophosphate to an asparagine residue within an Asn-X-Ser/Thr consensus motif in nascent polypeptide chains, the first step in protein N-glycosylation. This chain is Dolichyl-phosphooligosaccharide-protein glycotransferase 2 (aglB2), found in Pyrococcus horikoshii (strain ATCC 700860 / DSM 12428 / JCM 9974 / NBRC 100139 / OT-3).